A 96-amino-acid polypeptide reads, in one-letter code: Protein C4 (96 aa).

Gly2 carries N-myristoyl glycine; by host lipidation. A disordered region spans residues 66 to 96 (STDDLQGEDSRQPMTLTPRQLTQDVSRRLLM). The segment covering 77 to 89 (QPMTLTPRQLTQD) has biased composition (polar residues).

Belongs to the geminiviridae protein AC4/C4 family.

The protein localises to the host cell membrane. Its function is as follows. Pathogenicity determinant. May act as a suppressor of RNA-mediated gene silencing, also known as post-transcriptional gene silencing (PTGS), a mechanism of plant viral defense that limits the accumulation of viral RNAs. This Solanum lycopersicum (Tomato) protein is Protein C4.